We begin with the raw amino-acid sequence, 751 residues long: Photosystem I P700 chlorophyll a apoprotein A1 (751 aa).

8 consecutive transmembrane segments (helical) span residues 73–96 (VFSA…FHGA), 159–182 (LYST…WHYH), 198–222 (MNHH…HIAL), 294–312 (MAHH…GHQY), 349–372 (WHAQ…HHMY), 388–414 (LSLF…IFMV), 436–458 (AIIS…LYIH), and 533–551 (FMVH…LILL). Residues cysteine 575 and cysteine 584 each coordinate [4Fe-4S] cluster. The next 2 helical transmembrane spans lie at 591-612 (HVFL…HFSW) and 665-687 (LSAY…MFLF). Histidine 676 contacts chlorophyll a'. Chlorophyll a contacts are provided by methionine 684 and tyrosine 692. A phylloquinone-binding site is contributed by tryptophan 693. The chain crosses the membrane as a helical span at residues 725–745 (AVGVAHYLLGGIATTWSFFLA).

The protein belongs to the PsaA/PsaB family. As to quaternary structure, the PsaA/B heterodimer binds the P700 chlorophyll special pair and subsequent electron acceptors. PSI consists of a core antenna complex that captures photons, and an electron transfer chain that converts photonic excitation into a charge separation. The eukaryotic PSI reaction center is composed of at least 11 subunits. The cofactor is P700 is a chlorophyll a/chlorophyll a' dimer, A0 is one or more chlorophyll a, A1 is one or both phylloquinones and FX is a shared 4Fe-4S iron-sulfur center..

It is found in the plastid. The protein resides in the chloroplast thylakoid membrane. It carries out the reaction reduced [plastocyanin] + hnu + oxidized [2Fe-2S]-[ferredoxin] = oxidized [plastocyanin] + reduced [2Fe-2S]-[ferredoxin]. PsaA and PsaB bind P700, the primary electron donor of photosystem I (PSI), as well as the electron acceptors A0, A1 and FX. PSI is a plastocyanin/cytochrome c6-ferredoxin oxidoreductase, converting photonic excitation into a charge separation, which transfers an electron from the donor P700 chlorophyll pair to the spectroscopically characterized acceptors A0, A1, FX, FA and FB in turn. Oxidized P700 is reduced on the lumenal side of the thylakoid membrane by plastocyanin or cytochrome c6. The polypeptide is Photosystem I P700 chlorophyll a apoprotein A1 (Ostreococcus tauri).